The following is a 373-amino-acid chain: Chemerin-like receptor 1 (373 aa).

The Extracellular portion of the chain corresponds to methionine 1–isoleucine 41. Residue asparagine 9 is glycosylated (N-linked (GlcNAc...) asparagine). The chain crosses the membrane as a helical span at residues phenylalanine 42–isoleucine 64. The Cytoplasmic segment spans residues alanine 65–methionine 75. The chain crosses the membrane as a helical span at residues valine 76–threonine 97. Residues tyrosine 98–isoleucine 114 lie on the Extracellular side of the membrane. Cysteine 112 and cysteine 189 form a disulfide bridge. Residues serine 115–serine 135 form a helical membrane-spanning segment. At aspartate 136–arginine 154 the chain is on the cytoplasmic side. The helical transmembrane segment at leucine 155–valine 176 threads the bilayer. Residues phenylalanine 177–arginine 224 lie on the Extracellular side of the membrane. Asparagine 192 carries N-linked (GlcNAc...) asparagine glycosylation. The helical transmembrane segment at phenylalanine 225–cysteine 245 threads the bilayer. The Cytoplasmic segment spans residues lysine 246–isoleucine 261. Residues isoleucine 262–leucine 282 form a helical membrane-spanning segment. Residues glutamate 283 to leucine 300 are Extracellular-facing. Residues alanine 301–glycine 320 traverse the membrane as a helical segment. Topologically, residues glutamine 321 to leucine 373 are cytoplasmic. At serine 339 the chain carries Phosphoserine. Residues aspartate 341–leucine 373 are disordered. Phosphothreonine is present on threonine 342. Residues histidine 344–threonine 363 show a composition bias toward polar residues. Phosphoserine occurs at positions 349, 352, and 358. Over residues serine 364–leucine 373 the composition is skewed to basic and acidic residues.

Belongs to the chemokine-like receptor (CMKLR) family. Prominently expressed in developing osseous and cartilaginous tissue. Also found in adult parathyroid glands. Expressed in cardiovascular system, brain, kidney, gastrointestinal tissues and myeloid tissues. Expressed in a broad array of tissues associated with hematopoietic and immune function including, spleen, thymus, appendix, lymph node, bone marrow and fetal liver. Among leukocyte populations abundant expression in monocyte-derived macrophage and immature dendritic cells (DCs). High expression in blood monocytes and low levels in polymorphonuclear cells and T-cells. Expressed on endothelial cells. Highly expressed in differentiating adipocytes.

The protein resides in the cell membrane. In terms of biological role, receptor for the chemoattractant adipokine chemerin/RARRES2 and for the omega-3 fatty acid derived molecule resolvin E1. Interaction with RARRES2 initiates activation of G proteins G(i)/G(o) and beta-arrestin pathways inducing cellular responses via second messenger pathways such as intracellular calcium mobilization, phosphorylation of MAP kinases MAPK1/MAPK3 (ERK1/2), TYRO3, MAPK14/P38MAPK and PI3K leading to multifunctional effects, like reduction of immune responses, enhancing of adipogenesis and angionesis. Resolvin E1 down-regulates cytokine production in macrophages by reducing the activation of MAPK1/3 (ERK1/2) and NF-kappa-B. Positively regulates adipogenesis and adipocyte metabolism. Its function is as follows. (Microbial infection) Acts as a coreceptor for several SIV strains (SIVMAC316, SIVMAC239, SIVMACL7E-FR and SIVSM62A), as well as a primary HIV-1 strain (92UG024-2). The sequence is that of Chemerin-like receptor 1 from Homo sapiens (Human).